The chain runs to 715 residues: DNA-directed RNA polymerase subunit beta' (715 aa).

The Zn(2+) site is built by cysteine 69, cysteine 71, cysteine 87, and cysteine 90. Residues 244–272 (APESQSEVIEAQGPVPQAEEEKQRDQSIQ) are disordered. Mg(2+) is bound by residues aspartate 520, aspartate 522, and aspartate 524.

This sequence belongs to the RNA polymerase beta' chain family. RpoC1 subfamily. In plastids the minimal PEP RNA polymerase catalytic core is composed of four subunits: alpha, beta, beta', and beta''. When a (nuclear-encoded) sigma factor is associated with the core the holoenzyme is formed, which can initiate transcription. Mg(2+) is required as a cofactor. Zn(2+) serves as cofactor.

The protein localises to the plastid. Its subcellular location is the chloroplast. The enzyme catalyses RNA(n) + a ribonucleoside 5'-triphosphate = RNA(n+1) + diphosphate. Functionally, DNA-dependent RNA polymerase catalyzes the transcription of DNA into RNA using the four ribonucleoside triphosphates as substrates. This chain is DNA-directed RNA polymerase subunit beta', found in Zygnema circumcarinatum (Green alga).